A 508-amino-acid polypeptide reads, in one-letter code: Photosystem II CP47 reaction center protein (508 aa).

6 helical membrane-spanning segments follow: residues Ala21 to Ser36, Ile101 to Trp115, Gly140 to Phe156, Ile203 to Ser218, Val237 to Val252, and Thr457 to Arg472.

It belongs to the PsbB/PsbC family. PsbB subfamily. PSII is composed of 1 copy each of membrane proteins PsbA, PsbB, PsbC, PsbD, PsbE, PsbF, PsbH, PsbI, PsbJ, PsbK, PsbL, PsbM, PsbT, PsbX, PsbY, PsbZ, Psb30/Ycf12, at least 3 peripheral proteins of the oxygen-evolving complex and a large number of cofactors. It forms dimeric complexes. It depends on Binds multiple chlorophylls. PSII binds additional chlorophylls, carotenoids and specific lipids. as a cofactor.

The protein localises to the plastid. It is found in the chloroplast thylakoid membrane. Functionally, one of the components of the core complex of photosystem II (PSII). It binds chlorophyll and helps catalyze the primary light-induced photochemical processes of PSII. PSII is a light-driven water:plastoquinone oxidoreductase, using light energy to abstract electrons from H(2)O, generating O(2) and a proton gradient subsequently used for ATP formation. In Anthoceros angustus (Hornwort), this protein is Photosystem II CP47 reaction center protein.